We begin with the raw amino-acid sequence, 522 residues long: AAA ATPase forming ring-shaped complexes (522 aa).

Residues 1–26 are disordered; it reads MGQEKHTDAASQSRDPEAVAAHENDQ. A coiled-coil region spans residues 20-57; it reads AAHENDQLRQRNHALAKALTRATEELRKAKAQLEQFMA. 248–253 lines the ATP pocket; the sequence is GNGKTL.

The protein belongs to the AAA ATPase family. In terms of assembly, homohexamer. Assembles into a hexameric ring structure.

The chain is AAA ATPase forming ring-shaped complexes from Bifidobacterium animalis subsp. lactis (strain AD011).